We begin with the raw amino-acid sequence, 511 residues long: MATVREKAAALDLSALHSPAQRPPGFSVAQKPFGATYVWSSIINTLQTQVEVKKRRHHLKRHNDCFVGSEAVDVIYSHLTQNKFFGDVDIPRAKVVRVCQALMDYKVFEAVQTRVFGKDKKPAFEDSSCSLYRFTTIPNQDSQLGHENKGTSPSRFSDALFKSSDIKSDSLEDLWENLSLKPTNSPHVSTRLSPQVINEVWQEETIGRLLQLVDLPFLDSLLKQQEVVPKAPQSKRQPDMVNTSNYLDRGILRAYGDSQEDEWISAAIDCLEYLPDQMVVDISRNFPEQPDRTDLVKELLFGAIGKYYSTREPLLNHLSDVHNGIAELLVNGKTEIALEATQLFLKLLDSQNREEFRRLLYFMAVAADPSEFKLQEESDNRMVVKRVFSKAIVNNKNLSKGKTDLLVLFLMDHQKDVFKIPGTLHKIVSVKLLAIQKGRDPNKDTGYIYCQRIDGREYSSSIQKKTKDQLLSLLKTIDEDSKLSAKEKKKLLGQFHKSHPDIFIEYFGDSF.

The DEP domain maps to 46 to 136 (LQTQVEVKKR…SSCSLYRFTT (91 aa)).

It belongs to the DEPDC7 family.

The protein is DEP domain-containing protein 7 (Depdc7) of Rattus norvegicus (Rat).